The primary structure comprises 334 residues: F-box only protein 16 (334 aa).

The region spanning 86-132 is the F-box domain; the sequence is LDFTTKLPRVLSVYIFSFLDPRSLCRCAQVSWYWKSLAELDQLWMLK. Disordered regions lie at residues 168-222 and 314-334; these read PKTP…WRSS and LEHL…QSQS. Over residues 194 to 204 the composition is skewed to low complexity; that stretch reads SPSLAFRSSSS. The segment covering 210-222 has biased composition (basic and acidic residues); sequence NPGEKELPPWRSS. Positions 323 to 334 are enriched in low complexity; that stretch reads LQSPSPRLQSQS.

Part of a SCF (SKP1-cullin-F-box) protein ligase complex.

Its function is as follows. Probably recognizes and binds to some phosphorylated proteins and promotes their ubiquitination and degradation. The chain is F-box only protein 16 (Fbxo16) from Mus musculus (Mouse).